A 420-amino-acid chain; its full sequence is 3-phosphoshikimate 1-carboxyvinyltransferase (420 aa).

Residues Lys-26, Ser-27, and Arg-31 each contribute to the 3-phosphoshikimate site. Lys-26 is a phosphoenolpyruvate binding site. Phosphoenolpyruvate-binding residues include Gly-97 and Arg-125. Residues Ser-170, Ser-171, Gln-172, Asp-297, Asn-320, and Lys-324 each coordinate 3-phosphoshikimate. Residue Gln-172 participates in phosphoenolpyruvate binding. The active-site Proton acceptor is the Asp-297. Residues Arg-328, Arg-375, and Lys-400 each contribute to the phosphoenolpyruvate site.

Belongs to the EPSP synthase family. As to quaternary structure, monomer.

It is found in the cytoplasm. The catalysed reaction is 3-phosphoshikimate + phosphoenolpyruvate = 5-O-(1-carboxyvinyl)-3-phosphoshikimate + phosphate. It functions in the pathway metabolic intermediate biosynthesis; chorismate biosynthesis; chorismate from D-erythrose 4-phosphate and phosphoenolpyruvate: step 6/7. Catalyzes the transfer of the enolpyruvyl moiety of phosphoenolpyruvate (PEP) to the 5-hydroxyl of shikimate-3-phosphate (S3P) to produce enolpyruvyl shikimate-3-phosphate and inorganic phosphate. The polypeptide is 3-phosphoshikimate 1-carboxyvinyltransferase (Rhizobium leguminosarum bv. trifolii (strain WSM2304)).